The chain runs to 98 residues: Integration host factor subunit beta (98 aa).

The disordered stretch occupies residues 59 to 98 (RTGRNPKTGESVTLPGKYVPHFKPGKEMRDRVNESIQSEG). Over residues 82-91 (PGKEMRDRVN) the composition is skewed to basic and acidic residues.

It belongs to the bacterial histone-like protein family. As to quaternary structure, heterodimer of an alpha and a beta chain.

Functionally, this protein is one of the two subunits of integration host factor, a specific DNA-binding protein that functions in genetic recombination as well as in transcriptional and translational control. This is Integration host factor subunit beta from Saccharophagus degradans (strain 2-40 / ATCC 43961 / DSM 17024).